The sequence spans 364 residues: tRNA N6-adenosine threonylcarbamoyltransferase (364 aa).

Positions 115 and 119 each coordinate Fe cation. Substrate contacts are provided by residues L137 to G141, D170, G183, and N288. Fe cation is bound at residue D316. Residues P341–A364 are disordered.

It belongs to the KAE1 / TsaD family. Requires Fe(2+) as cofactor.

Its subcellular location is the cytoplasm. The enzyme catalyses L-threonylcarbamoyladenylate + adenosine(37) in tRNA = N(6)-L-threonylcarbamoyladenosine(37) in tRNA + AMP + H(+). Functionally, required for the formation of a threonylcarbamoyl group on adenosine at position 37 (t(6)A37) in tRNAs that read codons beginning with adenine. Is involved in the transfer of the threonylcarbamoyl moiety of threonylcarbamoyl-AMP (TC-AMP) to the N6 group of A37, together with TsaE and TsaB. TsaD likely plays a direct catalytic role in this reaction. The polypeptide is tRNA N6-adenosine threonylcarbamoyltransferase (Bartonella henselae (strain ATCC 49882 / DSM 28221 / CCUG 30454 / Houston 1) (Rochalimaea henselae)).